We begin with the raw amino-acid sequence, 637 residues long: Chaperone protein HtpG (637 aa).

Residues 1-345 (MSQQETHGFQ…SNDLPLNVSR (345 aa)) form an a; substrate-binding region. A b region spans residues 346–562 (EILQDNHITK…EGEMSTQMIK (217 aa)). The segment at 563–637 (LMQAAGQPVP…MNQMLLANLK (75 aa)) is c.

This sequence belongs to the heat shock protein 90 family. Homodimer.

The protein localises to the cytoplasm. Its function is as follows. Molecular chaperone. Has ATPase activity. The sequence is that of Chaperone protein HtpG from Shewanella oneidensis (strain ATCC 700550 / JCM 31522 / CIP 106686 / LMG 19005 / NCIMB 14063 / MR-1).